Reading from the N-terminus, the 601-residue chain is Elongation factor 4 (601 aa).

One can recognise a tr-type G domain in the interval 5–187 (IRKKNFCIIA…AICKYVPSPK (183 aa)). Residues 17–22 (DHGKST) and 134–137 (NKID) contribute to the GTP site.

It belongs to the TRAFAC class translation factor GTPase superfamily. Classic translation factor GTPase family. LepA subfamily.

It localises to the cell inner membrane. The enzyme catalyses GTP + H2O = GDP + phosphate + H(+). Required for accurate and efficient protein synthesis under certain stress conditions. May act as a fidelity factor of the translation reaction, by catalyzing a one-codon backward translocation of tRNAs on improperly translocated ribosomes. Back-translocation proceeds from a post-translocation (POST) complex to a pre-translocation (PRE) complex, thus giving elongation factor G a second chance to translocate the tRNAs correctly. Binds to ribosomes in a GTP-dependent manner. The sequence is that of Elongation factor 4 from Borreliella afzelii (strain PKo) (Borrelia afzelii).